We begin with the raw amino-acid sequence, 1009 residues long: MPALLDKLLRAGEGKILRKLKAIAEQVNSIEDEFAKLSDGELRGLTDEFRARYADGESLDDLLPEAFAAVREAAKRTLGQRHFDVQIMGGAALHFGNIAEMKTGEGKTLVSTLPAYLNALAGRGVHVVTVNDYLARRDAEWMGRIHRFLGLEVGVISPQMGPAERKKAYAADITYGTNNEFGFDYLRDNMAWSVDEIVQRGHFYAIVDEVDSILIDEARTPLIISGPVDMNQKWYTDFAKLAERLQRGENGEGDYEVDEKKRTISITERGVQRVEDWLGIDNLYEPTNTPLVGYLHNALRAKELYKRDRDYVVIDGEVLIVDEFTGRILYGRRYNEGMHQAIEAKEGVPIKQENQTLATITLQNYFRLYEKLAGMTGTAMTEANEFHQIYKLGVVPIPTNRPMIRIDQPDVVFKTEKAKFAAVVEDIAQRHAKGQPVLVGTTSVEKSELLSGMLLRRGIPHAVLNAKYHEKEAAIVAQAGRKGAVTVATNMAGRGTDIMLGGNPEFLARQELAERGLSPVDTPEEYEAAWPEVLEKWKKAVAAEHDEVVQLGGLYVLGTERHDSRRIDNQLRGRSGRQGDPGESRFYLSLEDDLMRLFNGPMVQRIMETLNYPEDVPLESKMVTRAIRSAQTQVEQQNFEIRKNVLKYDEVLNKQRAVIYAERRRVLHGDDLHEQVGHMIDDVIRDYVRAATEEGYAEDWDLEQLWTALRSLYPVGLTIDQVVAECGGDRSGLTAEFLIERLTEDAHRAYAEREAALGTLPDGQPVIRELERRVVLAVLDRKWREHLYEMDYLQEGIQLRSYGQRDPLVEYQREGYTMFQTMLDGIKEESVRLLFSVDVQVTPVAEAPVAATAAADGAGTAAEGTAGVAVPQPAGASGPALQPVPAATAPGQQPVPAAAALSPGAGMRLADSPVAKLLAPPRPTRLQYTAPTIDGAAGSGEATAMTVDERRPSGAAARGPSPASASRQRAGAGEQARPLMYAGTPRSAKCPCGSGKPYKRCHGDPRNAG.

Residues Gln-86, Gly-104–Thr-108, and Asp-497 contribute to the ATP site. Disordered stretches follow at residues Ala-869 to Pro-894 and Glu-949 to Gly-1009. 2 stretches are compositionally biased toward low complexity: residues Pro-883 to Pro-894 and Ser-953 to Gly-973. Residues Cys-990, Cys-992, Cys-1001, and His-1002 each contribute to the Zn(2+) site.

This sequence belongs to the SecA family. Monomer and homodimer. Part of the essential Sec protein translocation apparatus which comprises SecA, SecYEG and auxiliary proteins SecDF. Other proteins may also be involved. It depends on Zn(2+) as a cofactor.

The protein localises to the cell membrane. Its subcellular location is the cytoplasm. It catalyses the reaction ATP + H2O + cellular proteinSide 1 = ADP + phosphate + cellular proteinSide 2.. Part of the Sec protein translocase complex. Interacts with the SecYEG preprotein conducting channel. Has a central role in coupling the hydrolysis of ATP to the transfer of proteins into and across the cell membrane, serving as an ATP-driven molecular motor driving the stepwise translocation of polypeptide chains across the membrane. The polypeptide is Protein translocase subunit SecA (Acidothermus cellulolyticus (strain ATCC 43068 / DSM 8971 / 11B)).